A 324-amino-acid polypeptide reads, in one-letter code: RING-H2 finger protein ATL3 (324 aa).

A helical membrane pass occupies residues 24-44; sequence IILTAIIVLFMAVLFVLILHL. Residues 127–169 form an RING-type; atypical zinc finger; the sequence is CSICLSELVKGDKARLLPKCNHSFHVECIDMWFQSHSTCPICR. Disordered stretches follow at residues 179-210, 226-248, and 299-324; these read SSKR…STSS, VSTG…ASQS, and RDKR…SVDP. Polar residues-rich tracts occupy residues 192-210 and 226-235; these read NAGT…STSS and VSTGNTNVGT. Low complexity predominate over residues 306-324; it reads SNSSTSNSSSSNAVASVDP.

It belongs to the RING-type zinc finger family. ATL subfamily.

It localises to the membrane. The catalysed reaction is S-ubiquitinyl-[E2 ubiquitin-conjugating enzyme]-L-cysteine + [acceptor protein]-L-lysine = [E2 ubiquitin-conjugating enzyme]-L-cysteine + N(6)-ubiquitinyl-[acceptor protein]-L-lysine.. It functions in the pathway protein modification; protein ubiquitination. This is RING-H2 finger protein ATL3 (ATL3) from Arabidopsis thaliana (Mouse-ear cress).